The sequence spans 579 residues: Laccase (579 aa).

A signal peptide (tat-type signal) is located at residues 1-31; sequence MTDWSRRRFLQTGAALGIAGTLPQTTTEVSA. Residues 82–214 enclose the Plastocyanin-like 1 domain; it reads WGFDGSYPGP…AGLLGLYSIT (133 aa). 4 residues coordinate Cu cation: His145, His147, His192, and His194. Residues 372–401 are disordered; that stretch reads VSDPSTPPEDASADPTSLSLPTPASYDESD. The region spanning 423-530 is the Plastocyanin-like 2 domain; the sequence is LNGHVFGDED…NKMMIPFVVE (108 aa). The N-linked (GlcNAc...) asparagine glycan is linked to Asn449. Residues His455, His458, His460, His512, Cys513, His514, His518, and Met523 each contribute to the Cu cation site. Asn557 carries an N-linked (GlcNAc...) asparagine glycan.

This sequence belongs to the multicopper oxidase family. Cu(2+) serves as cofactor. In terms of processing, exported by the Tat system. Glycosylated.

It localises to the secreted. The catalysed reaction is 4 hydroquinone + O2 = 4 benzosemiquinone + 2 H2O. With respect to regulation, inhibited by 1 mM NaN(3), 10 mM thiourea, 10 mM 1,10-phenanthroline, 0.1 mM DL-dithiothreitol (DTT) and 1 mM L-cysteine. The inhibition by DTT and L-cysteine is likely caused by reduction of the oxidized substrate and not by inhibition of the enzyme. Catalyzes the oxidation of a wide variety of organic substrates, including bilirubin, syringaldazine (SGZ), 2,2'-azino-di-(3-ethylbenzothiazoline)-6-sulfonic acid (ABTS) and dimethoxyphenol (DMP). No oxidation of Fe(2+) or guaiacol. This Haloferax volcanii (strain ATCC 29605 / DSM 3757 / JCM 8879 / NBRC 14742 / NCIMB 2012 / VKM B-1768 / DS2) (Halobacterium volcanii) protein is Laccase (lccA).